The sequence spans 262 residues: 14-3-3-like protein A (262 aa).

Residues 240–262 form a disordered region; that stretch reads DNAEEGGDEIKEAASKPEGEGHS. A compositionally biased stretch (basic and acidic residues) spans 247-262; it reads DEIKEAASKPEGEGHS.

Belongs to the 14-3-3 family.

This Hordeum vulgare (Barley) protein is 14-3-3-like protein A.